Reading from the N-terminus, the 201-residue chain is MELVMKDAQGALTVSETTFGRDFNEALVHQVVVAYAAGARQGTRAQKTRAEVSGSGKKPWRQKGTGRARSGSIKSPIWRSGGVSFAAKPQDHSQKVNKKMYRGALKSILSELVRQDRLIVVEKFSVEAPKTKLLAQKLKDMALEDVLIVTAEVDENLYLAARNLYKVDVRDAATIDPVSLIAFDKVVMTADAVKQVEEMLA.

Residues 44-71 (RAQKTRAEVSGSGKKPWRQKGTGRARSG) are disordered.

This sequence belongs to the universal ribosomal protein uL4 family. As to quaternary structure, part of the 50S ribosomal subunit.

Its function is as follows. One of the primary rRNA binding proteins, this protein initially binds near the 5'-end of the 23S rRNA. It is important during the early stages of 50S assembly. It makes multiple contacts with different domains of the 23S rRNA in the assembled 50S subunit and ribosome. Functionally, forms part of the polypeptide exit tunnel. This Proteus mirabilis (strain HI4320) protein is Large ribosomal subunit protein uL4.